The primary structure comprises 278 residues: 4-deoxy-L-threo-5-hexosulose-uronate ketol-isomerase (278 aa).

Zn(2+) contacts are provided by histidine 196, histidine 198, glutamate 203, and histidine 245.

It belongs to the KduI family. Requires Zn(2+) as cofactor.

It catalyses the reaction 5-dehydro-4-deoxy-D-glucuronate = 3-deoxy-D-glycero-2,5-hexodiulosonate. The protein operates within glycan metabolism; pectin degradation; 2-dehydro-3-deoxy-D-gluconate from pectin: step 4/5. In terms of biological role, catalyzes the isomerization of 5-dehydro-4-deoxy-D-glucuronate to 3-deoxy-D-glycero-2,5-hexodiulosonate. The polypeptide is 4-deoxy-L-threo-5-hexosulose-uronate ketol-isomerase (Shigella boydii serotype 4 (strain Sb227)).